We begin with the raw amino-acid sequence, 1291 residues long: DNA-directed RNA polymerase subunit beta (1291 aa).

It belongs to the RNA polymerase beta chain family. In terms of assembly, the RNAP catalytic core consists of 2 alpha, 1 beta, 1 beta' and 1 omega subunit. When a sigma factor is associated with the core the holoenzyme is formed, which can initiate transcription.

It catalyses the reaction RNA(n) + a ribonucleoside 5'-triphosphate = RNA(n+1) + diphosphate. DNA-dependent RNA polymerase catalyzes the transcription of DNA into RNA using the four ribonucleoside triphosphates as substrates. The sequence is that of DNA-directed RNA polymerase subunit beta from Cytophaga hutchinsonii (strain ATCC 33406 / DSM 1761 / CIP 103989 / NBRC 15051 / NCIMB 9469 / D465).